Consider the following 309-residue polypeptide: Probable RNA polymerase II nuclear localization protein SLC7A6OS (309 aa).

Disordered stretches follow at residues 101 to 134 (GRYR…AGNS) and 233 to 287 (PEDI…QRMW). Positions 106–118 (LSSRRSLGTTSSG) are enriched in low complexity. Acidic residues-rich tracts occupy residues 233 to 245 (PEDI…DENS) and 254 to 263 (PEEESSDGDE). Residues Ser302 and Ser308 each carry the phosphoserine modification.

The protein belongs to the IWR1/SLC7A6OS family.

It localises to the cytoplasm. The protein localises to the nucleus. Directs RNA polymerase II nuclear import. The chain is Probable RNA polymerase II nuclear localization protein SLC7A6OS (SLC7A6OS) from Homo sapiens (Human).